Consider the following 254-residue polypeptide: Small ribosomal subunit protein uS2 (254 aa).

This sequence belongs to the universal ribosomal protein uS2 family.

The chain is Small ribosomal subunit protein uS2 from Brucella ovis (strain ATCC 25840 / 63/290 / NCTC 10512).